The primary structure comprises 170 residues: NADH-quinone oxidoreductase subunit B (170 aa).

[4Fe-4S] cluster contacts are provided by cysteine 37, cysteine 38, cysteine 102, and cysteine 131.

This sequence belongs to the complex I 20 kDa subunit family. In terms of assembly, NDH-1 is composed of 14 different subunits. Subunits NuoB, C, D, E, F, and G constitute the peripheral sector of the complex. Requires [4Fe-4S] cluster as cofactor.

It is found in the cell inner membrane. The catalysed reaction is a quinone + NADH + 5 H(+)(in) = a quinol + NAD(+) + 4 H(+)(out). In terms of biological role, NDH-1 shuttles electrons from NADH, via FMN and iron-sulfur (Fe-S) centers, to quinones in the respiratory chain. The immediate electron acceptor for the enzyme in this species is believed to be ubiquinone. Couples the redox reaction to proton translocation (for every two electrons transferred, four hydrogen ions are translocated across the cytoplasmic membrane), and thus conserves the redox energy in a proton gradient. The protein is NADH-quinone oxidoreductase subunit B of Citrifermentans bemidjiense (strain ATCC BAA-1014 / DSM 16622 / JCM 12645 / Bem) (Geobacter bemidjiensis).